The following is a 115-amino-acid chain: Phosphoribosyl-AMP cyclohydrolase (115 aa).

Aspartate 80 provides a ligand contact to Mg(2+). Cysteine 81 contacts Zn(2+). Mg(2+) contacts are provided by aspartate 82 and aspartate 84. Residues cysteine 97 and cysteine 104 each contribute to the Zn(2+) site.

This sequence belongs to the PRA-CH family. As to quaternary structure, homodimer. Mg(2+) serves as cofactor. The cofactor is Zn(2+).

The protein resides in the cytoplasm. It catalyses the reaction 1-(5-phospho-beta-D-ribosyl)-5'-AMP + H2O = 1-(5-phospho-beta-D-ribosyl)-5-[(5-phospho-beta-D-ribosylamino)methylideneamino]imidazole-4-carboxamide. Its pathway is amino-acid biosynthesis; L-histidine biosynthesis; L-histidine from 5-phospho-alpha-D-ribose 1-diphosphate: step 3/9. Its function is as follows. Catalyzes the hydrolysis of the adenine ring of phosphoribosyl-AMP. The sequence is that of Phosphoribosyl-AMP cyclohydrolase from Mycolicibacterium gilvum (strain PYR-GCK) (Mycobacterium gilvum (strain PYR-GCK)).